A 362-amino-acid polypeptide reads, in one-letter code: Phosphoserine aminotransferase (362 aa).

Residues Ser9 and Arg42 each coordinate L-glutamate. Residues 76 to 77, Trp102, Thr153, Asp174, and Gln197 each bind pyridoxal 5'-phosphate; that span reads GR. Residue Lys198 is modified to N6-(pyridoxal phosphate)lysine. 239–240 contributes to the pyridoxal 5'-phosphate binding site; that stretch reads NT.

This sequence belongs to the class-V pyridoxal-phosphate-dependent aminotransferase family. SerC subfamily. Homodimer. Requires pyridoxal 5'-phosphate as cofactor.

It localises to the cytoplasm. The catalysed reaction is O-phospho-L-serine + 2-oxoglutarate = 3-phosphooxypyruvate + L-glutamate. It catalyses the reaction 4-(phosphooxy)-L-threonine + 2-oxoglutarate = (R)-3-hydroxy-2-oxo-4-phosphooxybutanoate + L-glutamate. It functions in the pathway amino-acid biosynthesis; L-serine biosynthesis; L-serine from 3-phospho-D-glycerate: step 2/3. Its pathway is cofactor biosynthesis; pyridoxine 5'-phosphate biosynthesis; pyridoxine 5'-phosphate from D-erythrose 4-phosphate: step 3/5. Catalyzes the reversible conversion of 3-phosphohydroxypyruvate to phosphoserine and of 3-hydroxy-2-oxo-4-phosphonooxybutanoate to phosphohydroxythreonine. The chain is Phosphoserine aminotransferase from Salmonella agona (strain SL483).